Here is a 427-residue protein sequence, read N- to C-terminus: Serine hydroxymethyltransferase (427 aa).

Residue 120–122 participates in (6S)-5,6,7,8-tetrahydrofolate binding; the sequence is GHI. At lysine 226 the chain carries N6-(pyridoxal phosphate)lysine.

The protein belongs to the SHMT family. In terms of assembly, homodimer. It depends on pyridoxal 5'-phosphate as a cofactor.

The protein resides in the cytoplasm. It functions in the pathway amino-acid biosynthesis; glycine biosynthesis; glycine from L-serine: step 1/1. In terms of biological role, catalyzes the reversible interconversion of serine and glycine with a modified folate serving as the one-carbon carrier. Also exhibits a pteridine-independent aldolase activity toward beta-hydroxyamino acids, producing glycine and aldehydes, via a retro-aldol mechanism. This chain is Serine hydroxymethyltransferase, found in Pyrococcus furiosus (strain ATCC 43587 / DSM 3638 / JCM 8422 / Vc1).